The sequence spans 258 residues: Snake venom serine protease 1 (258 aa).

A signal peptide spans 1–18 (MVLIRVLANLLILQLSYA). Residues 19–24 (QKSSEL) constitute a propeptide that is removed on maturation. A Peptidase S1 domain is found at 25–249 (VVGGDECNIN…YNDWIKSIIA (225 aa)). Disulfide bonds link Cys-31/Cys-163, Cys-50/Cys-66, Cys-98/Cys-256, Cys-142/Cys-210, Cys-174/Cys-189, and Cys-200/Cys-225. Residue Asn-44 is glycosylated (N-linked (GlcNAc...) asparagine). Catalysis depends on charge relay system residues His-65 and Asp-110. The Charge relay system role is filled by Ser-204.

The protein belongs to the peptidase S1 family. Snake venom subfamily. Monomer. In terms of tissue distribution, expressed by the venom gland.

Its subcellular location is the secreted. Snake venom serine protease that may act in the hemostasis system of the prey. This chain is Snake venom serine protease 1 (TLG1), found in Craspedocephalus gramineus (Bamboo pit viper).